Consider the following 470-residue polypeptide: ATP synthase subunit beta (470 aa).

148 to 155 contacts ATP; sequence GGAGVGKT.

This sequence belongs to the ATPase alpha/beta chains family. As to quaternary structure, F-type ATPases have 2 components, CF(1) - the catalytic core - and CF(0) - the membrane proton channel. CF(1) has five subunits: alpha(3), beta(3), gamma(1), delta(1), epsilon(1). CF(0) has three main subunits: a(1), b(2) and c(9-12). The alpha and beta chains form an alternating ring which encloses part of the gamma chain. CF(1) is attached to CF(0) by a central stalk formed by the gamma and epsilon chains, while a peripheral stalk is formed by the delta and b chains.

It is found in the cell inner membrane. The enzyme catalyses ATP + H2O + 4 H(+)(in) = ADP + phosphate + 5 H(+)(out). Functionally, produces ATP from ADP in the presence of a proton gradient across the membrane. The catalytic sites are hosted primarily by the beta subunits. The polypeptide is ATP synthase subunit beta (Saccharophagus degradans (strain 2-40 / ATCC 43961 / DSM 17024)).